A 680-amino-acid chain; its full sequence is MTNPLLTSFSLPPFSAIKPEHVVPAVTKALADCRAAVEGVVAHGAPYSWENLCQPLAEADDVLGRIFSPISHLNSVKNSPELREAYEQTLPLLSEYSTWVGQHEGLYNAYRDLRDGDHYATLNTAQKKAVDNALRDFELSGIGLPKEKQQRYGEIATRLSELGNQYSNNVLDATMGWTKLITDEAELAGMPESALAAAKAQAEAKEQEGYLLTLDIPSYLPVMTYCDNQALREEMYRAYSTRASDQGPNAGKWDNSPVMEEILALRHELAQLLGFENYAHESLATKMAENPQQVLDFLTDLAKRARPQGEKELAQLRAFAKAEFGVEELQPWDIAYYSEKQKQHLYSISDEQLRPYFPENKAVNGLFEVVKRIYGITAKERTDVDVWHPEVRFFELYDENNELRGSFYLDLYAREHKRGGAWMDDCVGQMRKADGTLQKPVAYLTCNFNRPVNGKPALFTHDEVITLFHEFGHGLHHMLTRIETAGVSGISGVPWDAVELPSQFMENWCWEPEALAFISGHYETGEPLPKELLDKMLAAKNYQAALFILRQLEFGLFDFRLHAEFNPQQGAKILETLFEIKKQVAVVPSPTWGRFPHAFSHIFAGGYAAGYYSYLWADVLAADAYSRFEEEGIFNRETGQSFLDNILTRGGSEEPMELFKRFRGREPQLDAMLEHYGIKG.

Position 469 (H469) interacts with Zn(2+). The active site involves E470. Residues H473 and H476 each coordinate Zn(2+).

Belongs to the peptidase M3 family. Requires Zn(2+) as cofactor.

It catalyses the reaction Hydrolysis of oligopeptides, with broad specificity. Gly or Ala commonly occur as P1 or P1' residues, but more distant residues are also important, as is shown by the fact that Z-Gly-Pro-Gly-|-Gly-Pro-Ala is cleaved, but not Z-(Gly)(5).. Its function is as follows. May play a specific role in the degradation of signal peptides after they are released from precursor forms of secreted proteins. Can cleave N-acetyl-L-Ala(4). This is Oligopeptidase A (prlC) from Salmonella typhimurium (strain LT2 / SGSC1412 / ATCC 700720).